The following is a 62-amino-acid chain: Large ribosomal subunit protein uL29 (62 aa).

This sequence belongs to the universal ribosomal protein uL29 family.

This is Large ribosomal subunit protein uL29 from Ruthia magnifica subsp. Calyptogena magnifica.